An 840-amino-acid chain; its full sequence is Intracellular phospholipase A1 (840 aa).

2 disordered regions span residues 1-142 (MSGS…RRRK) and 666-718 (KKNK…AANA). Positions 26 to 39 (GKVKQKEKPKEKQM) are enriched in basic and acidic residues. The segment covering 97–111 (SRPSGLPSNGNPGSS) has biased composition (low complexity). Residues 564 to 827 (LEFKVKYLFA…ALFLANVLYC (264 aa)) enclose the DDHD domain. Basic and acidic residues predominate over residues 668-680 (NKDDKTADARSGG). The span at 681 to 694 (DDENEDEDECDSDE) shows a compositional bias: acidic residues.

This sequence belongs to the PA-PLA1 family.

It carries out the reaction 1,2-dihexadecanoyl-sn-glycero-3-phospho-(1D-myo-inositol) + H2O = 2-hexadecanoyl-sn-glycero-3-phospho-(1D-myo-inositol) + hexadecanoate + H(+). It catalyses the reaction a 1,2-diacyl-sn-glycero-3-phospho-L-serine + H2O = a 2-acyl-sn-glycero-3-phospho-L-serine + a fatty acid + H(+). The catalysed reaction is 1-hexadecanoyl-2-(9Z-octadecenoyl)-sn-glycero-3-phospho-L-serine + H2O = 2-(9Z-octadecenoyl)-sn-glycero-3-phospho-L-serine + hexadecanoate + H(+). The enzyme catalyses 1,2-di-(9Z-octadecenoyl)-sn-glycero-3-phosphocholine + H2O = (9Z-octadecenoyl)-sn-glycero-3-phosphocholine + (9Z)-octadecenoate + H(+). It carries out the reaction a 1,2-diacyl-sn-glycero-3-phosphocholine + H2O = a 1-acyl-sn-glycero-3-phosphocholine + a fatty acid + H(+). It catalyses the reaction 1,2-dihexadecanoyl-sn-glycero-3-phosphocholine + H2O = 1-hexadecanoyl-sn-glycero-3-phosphocholine + hexadecanoate + H(+). Inhibited by E-6-bromomethylene-3-1-naphthalenyl-2H-tetrahydropyran-2-one (BEL) in vitro. In terms of biological role, hydrolyzes the ester bond at the sn-1 position of glycerophospholipids and produces 2-acyl lysophospholipids, being phosphatidylinositol (PI) its major substrate. PI is a versatile lipid that not only serves as a structural component of cellular membranes, but also plays important roles in signal transduction through distinct phosphorylated derivatives of the inositol head group. Catalyzes the hydrolysis of phosphatidylcholine at sn-2 position in vitro. Regulates asymmetric division, an important property of stem cells in C.elegans, by controlling the subcellular localizations of beta-catenin. The protein is Intracellular phospholipase A1 of Caenorhabditis elegans.